A 202-amino-acid chain; its full sequence is dITP/XTP pyrophosphatase (202 aa).

Thr-10–Lys-15 provides a ligand contact to substrate. Asp-70 acts as the Proton acceptor in catalysis. Asp-70 is a binding site for Mg(2+). Residues Ser-71, Phe-153–Asp-156, Lys-176, and His-181–Arg-182 contribute to the substrate site.

Belongs to the HAM1 NTPase family. As to quaternary structure, homodimer. Mg(2+) is required as a cofactor.

The catalysed reaction is XTP + H2O = XMP + diphosphate + H(+). The enzyme catalyses dITP + H2O = dIMP + diphosphate + H(+). It carries out the reaction ITP + H2O = IMP + diphosphate + H(+). Functionally, pyrophosphatase that catalyzes the hydrolysis of nucleoside triphosphates to their monophosphate derivatives, with a high preference for the non-canonical purine nucleotides XTP (xanthosine triphosphate), dITP (deoxyinosine triphosphate) and ITP. Seems to function as a house-cleaning enzyme that removes non-canonical purine nucleotides from the nucleotide pool, thus preventing their incorporation into DNA/RNA and avoiding chromosomal lesions. The sequence is that of dITP/XTP pyrophosphatase from Methylacidiphilum infernorum (isolate V4) (Methylokorus infernorum (strain V4)).